A 557-amino-acid polypeptide reads, in one-letter code: Potassium-transporting ATPase potassium-binding subunit (557 aa).

Transmembrane regions (helical) follow at residues isoleucine 6–leucine 26, alanine 59–phenylalanine 79, alanine 127–leucine 147, leucine 172–valine 192, isoleucine 247–tyrosine 267, tryptophan 278–phenylalanine 298, isoleucine 363–valine 383, isoleucine 410–valine 430, valine 475–isoleucine 495, and phenylalanine 520–leucine 540.

This sequence belongs to the KdpA family. The system is composed of three essential subunits: KdpA, KdpB and KdpC.

It localises to the cell inner membrane. Part of the high-affinity ATP-driven potassium transport (or Kdp) system, which catalyzes the hydrolysis of ATP coupled with the electrogenic transport of potassium into the cytoplasm. This subunit binds the periplasmic potassium ions and delivers the ions to the membrane domain of KdpB through an intramembrane tunnel. The chain is Potassium-transporting ATPase potassium-binding subunit from Leptospira interrogans serogroup Icterohaemorrhagiae serovar Lai (strain 56601).